The following is a 479-amino-acid chain: GTPase Der (479 aa).

2 EngA-type G domains span residues Pro-3–Tyr-166 and Leu-192–Thr-365. GTP is bound by residues Gly-9–Ser-16, Asp-56–Ile-60, Asn-118–Asp-121, Gly-198–Ser-205, Asp-245–Val-249, and Asn-310–Asp-313. The 85-residue stretch at Gln-366–Val-450 folds into the KH-like domain.

It belongs to the TRAFAC class TrmE-Era-EngA-EngB-Septin-like GTPase superfamily. EngA (Der) GTPase family. Associates with the 50S ribosomal subunit.

Functionally, GTPase that plays an essential role in the late steps of ribosome biogenesis. The chain is GTPase Der from Idiomarina loihiensis (strain ATCC BAA-735 / DSM 15497 / L2-TR).